Here is an 84-residue protein sequence, read N- to C-terminus: Small ribosomal subunit protein uS17 (84 aa).

This sequence belongs to the universal ribosomal protein uS17 family. In terms of assembly, part of the 30S ribosomal subunit.

One of the primary rRNA binding proteins, it binds specifically to the 5'-end of 16S ribosomal RNA. The polypeptide is Small ribosomal subunit protein uS17 (Vibrio cholerae serotype O1 (strain ATCC 39541 / Classical Ogawa 395 / O395)).